Consider the following 757-residue polypeptide: MRFNQYSYINFPKENVLSELKKCGFDLQNTANHKDSLETFLRRFFFTYQDTNYPLSILAADKKTDLLTFFQSEDELTADIFYTVAFQLLGFSYLVDFEDSDVFRKETGFPIIYGDLIENLYQLLNTRTKKGNTLIDQLVSDGLIPEDNDYHYFNGKSLATFSNQDVIREVVYVESRVDTDQKGLSDLVKVSIIRPRFDGKIPAIMTASPYHQGTNDKASDKALYKMEGELEVKLPHKIELEKPQLNLVQPQGKAELIAEAEEKLTHINSSYTLNDYFLPRGFANLYVSGVGTKDSTGFMTNGDYQQIEAYKNVIDWLNGRCRAFTDHTRQRQVKADWSNGKVATTGLSYLGTMSNGLATTGVDGLEVIIAEAGISSWYNYYRENGLVTSPGGYPGEDFDSLAELTYSRNLLAGDYIRGNEAHQADLEKVKAQLDRKTGDYNQFWHDRNYLLNAHKVKAEVVFTHGSQDWNVKPLHVYQMFHALPTHINKHLFFHNGAHVYMNNWQSIDFRESINALLTKKLLGQETDFQLPTVIWQDNTAPQTWLSLDNFGGQENCETFSLGQEEQAIQNQYPDKDFERYGKTYQTFNTELYQGKANQITINLPVTKDLHLNGRAQLNLRIKSSTNKGLLSAQLLEFGQKKYLQPYPAILSARTIDNGRYHMLENLCELPFRPEAQRVVTKGYLNLQNRNDLLLVEDITADEWMDVQFELQPTIYKLKEGDTLRLVLYTTDFEITIRDNTDYHLTVDLAQSMLTLPC.

Active-site charge relay system residues include S348, D468, and H498.

This sequence belongs to the peptidase S15 family. Homodimer.

The protein localises to the cytoplasm. It carries out the reaction Hydrolyzes Xaa-Pro-|- bonds to release unblocked, N-terminal dipeptides from substrates including Ala-Pro-|-p-nitroanilide and (sequentially) Tyr-Pro-|-Phe-Pro-|-Gly-Pro-|-Ile.. Its function is as follows. Removes N-terminal dipeptides sequentially from polypeptides having unsubstituted N-termini provided that the penultimate residue is proline. In Streptococcus pneumoniae (strain ATCC BAA-255 / R6), this protein is Xaa-Pro dipeptidyl-peptidase.